Reading from the N-terminus, the 256-residue chain is MADPRRDPAAESKDRPSTERVAAYTADAVRAAEAPLLAEGRPLMRTAARALADIAAAEVRTTPGAVLVLAGAGDNGGDALFAAADLASSAERVDVVLVRDRVHREALDAAVAAGARVVSVSDASAGVADYALVLDGILGIGRLADRRLRGSARALVERLLALAHRPRVLAVDVPSGLDPDDGTADAVILPADVTVTFGALKAGLVRGRGPELSGRVHLVDLGLEPYLRRAHPAVTAAIDVVRETPRAAETDRAQRA.

Residues 1–18 (MADPRRDPAAESKDRPST) show a composition bias toward basic and acidic residues. A disordered region spans residues 1-21 (MADPRRDPAAESKDRPSTERV). Residues 23–229 (AYTADAVRAA…DLGLEPYLRR (207 aa)) form the YjeF N-terminal domain. Residue 74-78 (DNGGD) coordinates (6S)-NADPHX. K(+) is bound by residues N75 and D135. (6S)-NADPHX contacts are provided by residues 139–147 (GIGRLADRR) and D172. S175 is a K(+) binding site.

The protein belongs to the NnrE/AIBP family. Requires K(+) as cofactor.

It catalyses the reaction (6R)-NADHX = (6S)-NADHX. The catalysed reaction is (6R)-NADPHX = (6S)-NADPHX. Catalyzes the epimerization of the S- and R-forms of NAD(P)HX, a damaged form of NAD(P)H that is a result of enzymatic or heat-dependent hydration. This is a prerequisite for the S-specific NAD(P)H-hydrate dehydratase to allow the repair of both epimers of NAD(P)HX. The sequence is that of NAD(P)H-hydrate epimerase from Microbacterium testaceum (strain StLB037).